The following is a 261-amino-acid chain: Protein unc-50 homolog (261 aa).

Transmembrane regions (helical) follow at residues 37–57 (IFHY…YLCF), 82–102 (AFAV…AITF), 113–133 (VMFW…ATIG), 166–186 (SFFP…PILL), 190–210 (LFAA…YYYV), and 225–245 (VVFL…VVMG).

The protein belongs to the unc-50 family.

The protein resides in the membrane. The chain is Protein unc-50 homolog from Dictyostelium discoideum (Social amoeba).